A 269-amino-acid polypeptide reads, in one-letter code: uncharacterized protein (269 aa).

4 helical membrane passes run 64 to 84 (FVYFLFFLCFFLNNVLFLAGV), 125 to 145 (YGIANLVFGLISLALLVFLSF), 169 to 189 (FFISIVVYLLWILLMVLFLVL), and 230 to 250 (VFATAWAISLVFYSFFFIAIF).

Its subcellular location is the cell membrane. This is an uncharacterized protein from Mycoplasma genitalium (strain ATCC 33530 / DSM 19775 / NCTC 10195 / G37) (Mycoplasmoides genitalium).